A 483-amino-acid chain; its full sequence is Cobyric acid synthase (483 aa).

The 187-residue stretch at 248–434 (ALRVVVPVLP…LHGLFEQPSA (187 aa)) folds into the GATase cobBQ-type domain. The Nucleophile role is filled by Cys329. The active site involves His426.

Belongs to the CobB/CobQ family. CobQ subfamily.

It functions in the pathway cofactor biosynthesis; adenosylcobalamin biosynthesis. Catalyzes amidations at positions B, D, E, and G on adenosylcobyrinic A,C-diamide. NH(2) groups are provided by glutamine, and one molecule of ATP is hydrogenolyzed for each amidation. The protein is Cobyric acid synthase of Ectopseudomonas mendocina (strain ymp) (Pseudomonas mendocina).